We begin with the raw amino-acid sequence, 91 residues long: Probable Fe(2+)-trafficking protein (91 aa).

Belongs to the Fe(2+)-trafficking protein family.

Could be a mediator in iron transactions between iron acquisition and iron-requiring processes, such as synthesis and/or repair of Fe-S clusters in biosynthetic enzymes. The chain is Probable Fe(2+)-trafficking protein from Burkholderia thailandensis (strain ATCC 700388 / DSM 13276 / CCUG 48851 / CIP 106301 / E264).